The primary structure comprises 226 residues: Endonuclease V (226 aa).

Mg(2+)-binding residues include Asp43 and Asp111.

This sequence belongs to the endonuclease V family. Mg(2+) serves as cofactor.

The protein resides in the cytoplasm. It catalyses the reaction Endonucleolytic cleavage at apurinic or apyrimidinic sites to products with a 5'-phosphate.. Functionally, DNA repair enzyme involved in the repair of deaminated bases. Selectively cleaves double-stranded DNA at the second phosphodiester bond 3' to a deoxyinosine leaving behind the intact lesion on the nicked DNA. This Nocardia farcinica (strain IFM 10152) protein is Endonuclease V.